The following is a 125-amino-acid chain: Cystatin-like cysteine protease inhibitor EPIC2B (125 aa).

Positions 1–21 (MSFLRPTLALLAVTALVTTSG) are cleaved as a signal peptide. Asn45 carries an N-linked (GlcNAc...) asparagine glycan. A Secondary area of contact motif is present at residues 68–72 (QVVSG).

It belongs to the cystatin family. Interacts with the host papain-like cysteine protease PIP1. Interacts with the host papain-like cysteine protease RCR3. Interacts with the host papain-like cysteine protease C14.

It is found in the secreted. In terms of biological role, secreted effector that interacts with and inhibits the pathogenesis-related papain-like cysteine proteases C14, PIP1 and RCR3 of host plants. Inhibition of host proteases by a pathogen extracellular protease inhibitor forms a specific type of defense-counterdefense mechanism between plants and microbial pathogens. The sequence is that of Cystatin-like cysteine protease inhibitor EPIC2B from Phytophthora infestans (Potato late blight agent).